Here is a 162-residue protein sequence, read N- to C-terminus: Early E1A 18 kDa protein (162 aa).

Residues glutamate 134–cysteine 162 form a disordered region. Positions aspartate 150 to cysteine 162 are enriched in polar residues.

This Tree shrew adenovirus serotype 1 (TSAdV-1) protein is Early E1A 18 kDa protein.